An 882-amino-acid polypeptide reads, in one-letter code: Serine/threonine-protein kinase greatwall (882 aa).

Met1 carries the N-acetylmethionine modification. Positions Phe35–Phe838 constitute a Protein kinase domain. ATP is bound by residues Ile41–Val49 and Lys62. Asp156 functions as the Proton acceptor in the catalytic mechanism. Thr207 and Thr222 each carry phosphothreonine. A phosphoserine mark is found at Ser293, Ser371, and Ser454. Residue Thr521 is modified to Phosphothreonine. Ser554, Ser558, Ser633, Ser660, and Ser671 each carry phosphoserine. The tract at residues Thr713–Val736 is disordered. Thr725 carries the phosphothreonine modification. Ser728 carries the phosphoserine modification. Position 744 is a phosphothreonine; by CDK1 (Thr744). The AGC-kinase C-terminal domain maps to Ser839 to Leu882. Ser878 and Ser881 each carry phosphoserine.

This sequence belongs to the protein kinase superfamily. AGC Ser/Thr protein kinase family. Phosphorylation at Thr-744 by CDK1 during M phase activates its kinase activity. Maximum phosphorylation occurs in prometaphase.

The protein resides in the cytoplasm. It localises to the cytoskeleton. The protein localises to the microtubule organizing center. It is found in the centrosome. Its subcellular location is the nucleus. It catalyses the reaction L-seryl-[protein] + ATP = O-phospho-L-seryl-[protein] + ADP + H(+). The enzyme catalyses L-threonyl-[protein] + ATP = O-phospho-L-threonyl-[protein] + ADP + H(+). Serine/threonine kinase that plays a key role in M phase by acting as a regulator of mitosis entry and maintenance. Acts by promoting the inactivation of protein phosphatase 2A (PP2A) during M phase: does not directly inhibit PP2A but acts by mediating phosphorylation and subsequent activation of ARPP19 and ENSA at 'Ser-62' and 'Ser-67', respectively. ARPP19 and ENSA are phosphatase inhibitors that specifically inhibit the PPP2R2D (PR55-delta) subunit of PP2A. Inactivation of PP2A during M phase is essential to keep cyclin-B1-CDK1 activity high. Following DNA damage, it is also involved in checkpoint recovery by being inhibited. The chain is Serine/threonine-protein kinase greatwall (MASTL) from Ailuropoda melanoleuca (Giant panda).